The primary structure comprises 90 residues: UPF0184 protein (90 aa).

Positions Asp-16–Glu-78 form a coiled coil. The segment at Ser-57–Gln-90 is disordered. The segment covering Thr-81 to Gln-90 has biased composition (basic and acidic residues).

It belongs to the UPF0184 (EST00098) family.

The chain is UPF0184 protein from Branchiostoma floridae (Florida lancelet).